Reading from the N-terminus, the 159-residue chain is MYKQKGFTLIELMIVIAIIGILAAIALPLYQDHMAKAQINRVFYELGSTKTAVESILAHGGIPTVDPSQDGVVQNSRRLEFLGLNQNPNSNLIFTASVGLNSNQFERVNATFGRNALPQIQGAVISFVRDNQGQWTCEIDKSNAAYCPPKYTPATCVTI.

A propeptide spans 1–6 (MYKQKG) (leader sequence). An N-methylphenylalanine modification is found at phenylalanine 7. A helical transmembrane segment spans residues 7 to 29 (FTLIELMIVIAIIGILAAIALPL). Cysteine 137 and cysteine 156 are disulfide-bonded.

It belongs to the N-Me-Phe pilin family.

The protein localises to the fimbrium. Its subcellular location is the membrane. This Eikenella corrodens protein is Fimbrial protein EcpB (ecpB).